The following is a 467-amino-acid chain: tRNA(Ile)-lysidine synthase (467 aa).

26–31 lines the ATP pocket; the sequence is SGGPDS.

It belongs to the tRNA(Ile)-lysidine synthase family.

It localises to the cytoplasm. The catalysed reaction is cytidine(34) in tRNA(Ile2) + L-lysine + ATP = lysidine(34) in tRNA(Ile2) + AMP + diphosphate + H(+). In terms of biological role, ligates lysine onto the cytidine present at position 34 of the AUA codon-specific tRNA(Ile) that contains the anticodon CAU, in an ATP-dependent manner. Cytidine is converted to lysidine, thus changing the amino acid specificity of the tRNA from methionine to isoleucine. In Clostridium tetani (strain Massachusetts / E88), this protein is tRNA(Ile)-lysidine synthase.